Consider the following 193-residue polypeptide: Partner of Y14 and mago (193 aa).

Disordered regions lie at residues 1-27 (MSTP…DGTW) and 118-142 (IQEP…TKRL). Over residues 122 to 137 (TLPSQSVPTESISQSD) the composition is skewed to polar residues. Residues 139–192 (TKRLKNLRKKLREIEFLEEKIKAGLLKSPDKDQKEKMSKKNEILNEIDILKNSI) adopt a coiled-coil conformation.

Belongs to the pym family. In terms of assembly, interacts (via N-terminus) with mago and tsu/Y14; the interaction is direct.

The protein localises to the cytoplasm. The protein resides in the nucleus. Its function is as follows. Regulator of the exon junction complex (EJC), a multiprotein complex that associates immediately upstream of the exon-exon junction on mRNAs and serves as a positional landmarks for the intron exon structure of genes and directs post-transcriptional processes in the cytoplasm such as mRNA export, nonsense-mediated mRNA decay (NMD) or translation. The chain is Partner of Y14 and mago from Bombyx mori (Silk moth).